A 400-amino-acid chain; its full sequence is Elongation factor Tu (400 aa).

Residues 10-208 (KPHMNVGTIG…AMDSYFPDPV (199 aa)) form the tr-type G domain. Positions 19–26 (GHIDHGKT) are G1. 19–26 (GHIDHGKT) serves as a coordination point for GTP. Threonine 26 contributes to the Mg(2+) binding site. Positions 60–64 (GITIN) are G2. The G3 stretch occupies residues 81 to 84 (DCPG). Residues 81-85 (DCPGH) and 136-139 (NKVD) each bind GTP. Residues 136 to 139 (NKVD) are G4. Residues 174–176 (SAL) form a G5 region.

It belongs to the TRAFAC class translation factor GTPase superfamily. Classic translation factor GTPase family. EF-Tu/EF-1A subfamily. As to quaternary structure, monomer.

It localises to the cytoplasm. The catalysed reaction is GTP + H2O = GDP + phosphate + H(+). GTP hydrolase that promotes the GTP-dependent binding of aminoacyl-tRNA to the A-site of ribosomes during protein biosynthesis. The polypeptide is Elongation factor Tu (Fervidobacterium nodosum (strain ATCC 35602 / DSM 5306 / Rt17-B1)).